Here is a 92-residue protein sequence, read N- to C-terminus: Small ribosomal subunit protein uS19 (92 aa).

It belongs to the universal ribosomal protein uS19 family.

Functionally, protein S19 forms a complex with S13 that binds strongly to the 16S ribosomal RNA. This Dinoroseobacter shibae (strain DSM 16493 / NCIMB 14021 / DFL 12) protein is Small ribosomal subunit protein uS19.